The sequence spans 430 residues: Enolase (430 aa).

A (2R)-2-phosphoglycerate-binding site is contributed by Q163. E205 (proton donor) is an active-site residue. Positions 242, 288, and 315 each coordinate Mg(2+). 4 residues coordinate (2R)-2-phosphoglycerate: K340, R369, S370, and K391. Catalysis depends on K340, which acts as the Proton acceptor.

The protein belongs to the enolase family. Mg(2+) serves as cofactor.

It localises to the cytoplasm. The protein resides in the secreted. Its subcellular location is the cell surface. It catalyses the reaction (2R)-2-phosphoglycerate = phosphoenolpyruvate + H2O. It functions in the pathway carbohydrate degradation; glycolysis; pyruvate from D-glyceraldehyde 3-phosphate: step 4/5. Functionally, catalyzes the reversible conversion of 2-phosphoglycerate (2-PG) into phosphoenolpyruvate (PEP). It is essential for the degradation of carbohydrates via glycolysis. This Phytoplasma australiense protein is Enolase.